Consider the following 355-residue polypeptide: Peptide chain release factor 1 (355 aa).

Q233 carries the N5-methylglutamine modification. Basic and acidic residues predominate over residues 280–293; it reads ERRKKEQERADSRR. A disordered region spans residues 280-306; it reads ERRKKEQERADSRRGQVGSGNRSERIR.

The protein belongs to the prokaryotic/mitochondrial release factor family. In terms of processing, methylated by PrmC. Methylation increases the termination efficiency of RF1.

The protein resides in the cytoplasm. Functionally, peptide chain release factor 1 directs the termination of translation in response to the peptide chain termination codons UAG and UAA. The protein is Peptide chain release factor 1 of Rickettsia africae (strain ESF-5).